Here is a 473-residue protein sequence, read N- to C-terminus: Heavy metal-associated isoprenylated plant protein 32 (473 aa).

The HMA domain occupies 9-72 (IQTCVLKVNI…KLAKSGKHAE (64 aa)). A metal cation contacts are provided by C20 and C23. Disordered regions lie at residues 96-139 (QIDH…KMGQ), 162-230 (KLPP…PNMT), and 246-343 (ANLA…QNMS). Residues 118 to 131 (KNGGGGGGGGGGGN) show a composition bias toward gly residues. A compositionally biased stretch (acidic residues) spans 187–217 (PEDDDDDDFSDEFDDEFTDDDDDEFDDEFDD). The segment covering 253–339 (AKNGGKGAPA…GFRPMGGGGP (87 aa)) has biased composition (gly residues). Cysteine methyl ester is present on C470. C470 carries the S-farnesyl cysteine lipid modification. Residues 471–473 (DIM) constitute a propeptide, removed in mature form.

This sequence belongs to the HIPP family.

Heavy-metal-binding protein. This Arabidopsis thaliana (Mouse-ear cress) protein is Heavy metal-associated isoprenylated plant protein 32.